The sequence spans 624 residues: Heat shock factor protein 5 (624 aa).

A DNA-binding region spans residues 11 to 228; that stretch reads NPNNFPAKLW…FHRSFRRDNL (218 aa). Disordered regions lie at residues 52–77, 112–138, 186–214, 429–461, and 572–605; these read LSPP…SGVG, GAAG…HSPH, SASA…HGPV, CPSS…LEPL, and GPAN…DLHL. 2 stretches are compositionally biased toward gly residues: residues 58–77 and 112–127; these read GAGG…SGVG and GAAG…GPAG. Low complexity-rich tracts occupy residues 186 to 197 and 442 to 457; these read SASASTSPLQHQ and PNAN…QASQ. Serine 600 carries the phosphoserine modification.

The protein belongs to the HSF family. As to quaternary structure, homooligomer. In terms of tissue distribution, highly expressed in testis particularly in spermatocytes (at protein level). Not expressed in fetal testis and ovary.

Its subcellular location is the nucleus. It localises to the chromosome. Its function is as follows. DNA-binding transcription factor that is essential for male fertility, spermatogenesis and meiotic prophase progression in spermatocytes under non-stress conditions. Positvely and negatively regulates gene expression to ensure progression of meiotic prophase beyond pachytene stage in spermatocytes. Plays a role in male germline meiotic sex chromosome remodeling and silencing through regulation of SMARCA4. The sequence is that of Heat shock factor protein 5 (Hsf5) from Mus musculus (Mouse).